Here is a 436-residue protein sequence, read N- to C-terminus: Adenylosuccinate synthetase (436 aa).

Residues 12 to 18 and 40 to 42 contribute to the GTP site; these read GDEGKGK and GHT. D13 (proton acceptor) is an active-site residue. Mg(2+) is bound by residues D13 and G40. Residues 13 to 16, 38 to 41, T128, R142, Q223, T238, and R302 contribute to the IMP site; these read DEGK and NAGH. The Proton donor role is filled by H41. 298-304 provides a ligand contact to substrate; sequence TTTGRRR. GTP-binding positions include R304, 330-332, and 412-414; these read KLD and SLG.

It belongs to the adenylosuccinate synthetase family. In terms of assembly, homodimer. Mg(2+) serves as cofactor.

The protein resides in the cytoplasm. It carries out the reaction IMP + L-aspartate + GTP = N(6)-(1,2-dicarboxyethyl)-AMP + GDP + phosphate + 2 H(+). It participates in purine metabolism; AMP biosynthesis via de novo pathway; AMP from IMP: step 1/2. Its function is as follows. Plays an important role in the de novo pathway of purine nucleotide biosynthesis. Catalyzes the first committed step in the biosynthesis of AMP from IMP. This Prochlorococcus marinus (strain MIT 9312) protein is Adenylosuccinate synthetase.